The primary structure comprises 4391 residues: Basement membrane-specific heparan sulfate proteoglycan core protein (4391 aa).

The first 21 residues, 1 to 21 (MGWRAAGALLLALLLHGRLLA), serve as a signal peptide directing secretion. O-linked (GalNAc...) threonine glycosylation is present at Thr42. O-linked (Xyl...) (heparan sulfate) serine glycans are attached at residues Ser65, Ser71, and Ser76. Residues 80–191 (QMVYFRALVN…QGFQFRRLGT (112 aa)) enclose the SEA domain. The N-linked (GlcNAc...) asparagine glycan is linked to Asn89. LDL-receptor class A domains lie at 198–235 (ACTEAEFACHSYNECVALEYRCDRRPDCRDMSDELNCE), 284–320 (PCGPQEAACRNGHCIPRDYLCDGQEDCEDGSDELDCG), 324–360 (PCEPNEFPCGNGHCALKLWRCDGDFDCEDRTDEANCP), and 367–404 (VCGPTQFRCVSTNMCIPASFHCDEESDCPDRSDEFGCM). 12 cysteine pairs are disulfide-bonded: Cys199–Cys212, Cys206–Cys225, Cys219–Cys234, Cys285–Cys297, Cys292–Cys310, Cys304–Cys319, Cys325–Cys337, Cys332–Cys350, Cys344–Cys359, Cys368–Cys381, Cys375–Cys394, and Cys388–Cys403. Residues 405–504 (PPQVVTPPRE…VLELVPQRGP (100 aa)) enclose the Ig-like C2-type 1 domain. The 10-residue stretch at 521–530 (CFCFGITSVC) folds into the Laminin EGF-like 1; first part domain. Positions 538 to 730 (DQIRLRFDQP…SHGRAHSVEE (193 aa)) constitute a Laminin IV type A 1 domain. A glycan (N-linked (GlcNAc...) asparagine) is linked at Asn554. The region spanning 731 to 763 (CRCPIGYSGLSCESCDAHFTRVPGGPYLGTCSG) is the Laminin EGF-like 1; second part domain. Intrachain disulfides connect Cys764-Cys773, Cys766-Cys780, Cys783-Cys792, Cys795-Cys811, Cys814-Cys829, Cys816-Cys839, Cys842-Cys851, Cys854-Cys869, Cys879-Cys892, Cys894-Cys903, and Cys906-Cys921. 2 Laminin EGF-like domains span residues 764-813 (CNCN…SCRP) and 814-871 (CPCP…KCRP). One can recognise a Laminin EGF-like 4; truncated domain in the interval 879 to 923 (CDERGSMGTSGEACRCKNNVVGRLCNECADGSFHLSTRNPDGCLK). Residues 924-933 (CFCMGVSRHC) form the Laminin EGF-like 5; first part domain. The Laminin IV type A 2 domain maps to 941 to 1125 (AQLHGASEEP…GQDPALEVEQ (185 aa)). One can recognise a Laminin EGF-like 5; second part domain in the interval 1126–1158 (CSCPPGYRGPSCQDCDTGYTRTPSGLYLGTCER). 12 disulfides stabilise this stretch: Cys1159/Cys1168, Cys1161/Cys1175, Cys1178/Cys1187, Cys1190/Cys1206, Cys1209/Cys1224, Cys1211/Cys1234, Cys1237/Cys1246, Cys1249/Cys1263, Cys1275/Cys1287, Cys1277/Cys1293, Cys1295/Cys1304, and Cys1307/Cys1322. 3 Laminin EGF-like domains span residues 1159–1208 (CSCH…DCQL), 1209–1265 (CPCY…PCQR), and 1275–1324 (CNCD…GCLP). The Laminin EGF-like 9; first part domain maps to 1325–1334 (CFCMGITQQC). The 186-residue stretch at 1344 to 1529 (ISTHFAPGDF…NRPRALEVEE (186 aa)) folds into the Laminin IV type A 3 domain. A Laminin EGF-like 9; second part domain is found at 1530–1562 (CRCPPGYIGLSCQDCAPGYTRTGSGLYLGHCEL). Cystine bridges form between Cys1563-Cys1572, Cys1565-Cys1579, Cys1582-Cys1591, Cys1594-Cys1610, Cys1613-Cys1628, Cys1615-Cys1638, Cys1641-Cys1650, and Cys1653-Cys1668. Laminin EGF-like domains are found at residues 1563 to 1612 (CECN…DCQP) and 1613 to 1670 (CACP…QCLP). Ig-like C2-type domains lie at 1677–1771 (LVVE…SKPI), 1772–1865 (TVTV…TLSA), 1866–1955 (PVVS…GGGG), 1956–2051 (PRVQ…ASPP), 2052–2151 (PVKI…PGST), 2152–2244 (RPIR…PGPI), 2245–2340 (PPVR…AGST), 2341–2436 (QPIR…LGVT), 2437–2533 (PTVR…QGVA), 2534–2629 (YPVR…PSVS), 2630–2726 (PPIR…PGSS), 2727–2826 (MPIR…PGGA), 2827–2924 (PPIR…PGLA), 2925–3021 (QPIY…RLRS), 3022–3112 (PVIS…HGPP), 3113–3211 (TVSV…APGA), 3212–3298 (PQVQ…VESP), 3299–3399 (PYAT…AGST), 3400–3488 (PTVQ…ALPS), 3489–3574 (VLIN…LVQA), and 3575–3662 (LPQI…PERV). N-linked (GlcNAc...) asparagine glycosylation is present at Asn1755. N-linked (GlcNAc...) asparagine glycosylation is present at Asn2121. Positions 2994 to 3014 (ASGPGPEQEASFTVTVPPSEG) are disordered. Ser2995 carries O-linked (Xyl...) (chondroitin sulfate) serine glycosylation. Polar residues predominate over residues 3003-3014 (ASFTVTVPPSEG). Residues Asn3072 and Asn3105 are each glycosylated (N-linked (GlcNAc...) asparagine). N-linked (GlcNAc...) asparagine glycosylation is present at Asn3279. The Laminin G-like 1 domain occupies 3663-3843 (VPYFTQTPYS…DLNLTAHGIS (181 aa)). 2 N-linked (GlcNAc...) asparagine glycosylation sites follow: Asn3780 and Asn3836. 7 cysteine pairs are disulfide-bonded: Cys3819–Cys3845, Cys3848–Cys3859, Cys3853–Cys3869, Cys3871–Cys3880, Cys3888–Cys3899, Cys3893–Cys3910, and Cys3912–Cys3921. EGF-like domains follow at residues 3844–3881 (HCPTCRDRPCQNGGQCHDSESSSYVCVCPAGFTGSRCE) and 3884–3922 (QALHCHPEACGPDATCVNRPDGRGYTCRCHLGRSGLRCE). A Laminin G-like 2 domain is found at 3928 to 4103 (TTPSLSGAGS…LGSQGIGQCY (176 aa)). Ser3933 is a glycosylation site (O-linked (Xyl...) (chondroitin sulfate) serine). The N-linked (GlcNAc...) asparagine glycan is linked to Asn4068. Disulfide bonds link Cys4076-Cys4102, Cys4108-Cys4119, Cys4113-Cys4129, Cys4131-Cys4140, Cys4147-Cys4159, Cys4153-Cys4164, and Cys4166-Cys4175. EGF-like domains lie at 4104–4141 (DSSPCERQPCQHGATCMPAGEYEFQCLCRDGFKGDLCE) and 4143–4176 (EENPCQLREPCLHGGTCQGTRCLCLPGFSGPRCQ). A mediates motor neuron attachment region spans residues 4149–4151 (LRE). Ser4179 and Ser4193 each carry an O-linked (Xyl...) (chondroitin sulfate) serine glycan. The region spanning 4201 to 4389 (QYGAYFHDDG…AQAGANTRPC (189 aa)) is the Laminin G-like 3 domain. Ca(2+)-binding residues include Asp4258 and Leu4275. The interval 4299–4301 (LRE) is mediates motor neuron attachment. Residues Ala4325 and Asn4327 each contribute to the Ca(2+) site. Residues Cys4355 and Cys4389 are joined by a disulfide bond. The interval 4364 to 4391 (ARPGAPPPQPLDLQHRAQAGANTRPCPS) is disordered.

As to quaternary structure, has a strong tendency to aggregate in dimers or stellate structures. Interacts with other basement membrane components such as laminin, prolargin and collagen type IV. Interacts with COL13A1. Interacts with FGFBP1. Interacts with VWA1. Interacts (via C-terminus) with ECM1 (via C-terminus). Interacts with SVEP1. Proteolytic processing produces the C-terminal angiogenic peptide, endorepellin. This peptide can be further processed to produce the LG3 peptide. Post-translationally, O-glycosylated with core 1 or possibly core 8 glycans. Contains three heparan sulfate chains. Also contains chondroitin sulfate. Detected in cerebrospinal fluid, fibroblasts and urine (at protein level).

It is found in the secreted. It localises to the extracellular space. Its subcellular location is the extracellular matrix. The protein resides in the basement membrane. In terms of biological role, integral component of basement membranes. Component of the glomerular basement membrane (GBM), responsible for the fixed negative electrostatic membrane charge, and which provides a barrier which is both size- and charge-selective. It serves as an attachment substrate for cells. Plays essential roles in vascularization. Critical for normal heart development and for regulating the vascular response to injury. Also required for avascular cartilage development. Anti-angiogenic and anti-tumor peptide that inhibits endothelial cell migration, collagen-induced endothelial tube morphogenesis and blood vessel growth in the chorioallantoic membrane. Blocks endothelial cell adhesion to fibronectin and type I collagen. Anti-tumor agent in neovascularization. Interaction with its ligand, integrin alpha2/beta1, is required for the anti-angiogenic properties. Evokes a reduction in phosphorylation of receptor tyrosine kinases via alpha2/beta1 integrin-mediated activation of the tyrosine phosphatase, PTPN6. Functionally, has anti-angiogenic properties that require binding of calcium ions for full activity. This Homo sapiens (Human) protein is Basement membrane-specific heparan sulfate proteoglycan core protein (HSPG2).